The primary structure comprises 377 residues: Ribosomal RNA large subunit methyltransferase G (377 aa).

This sequence belongs to the methyltransferase superfamily. RlmG family.

The protein localises to the cytoplasm. It catalyses the reaction guanosine(1835) in 23S rRNA + S-adenosyl-L-methionine = N(2)-methylguanosine(1835) in 23S rRNA + S-adenosyl-L-homocysteine + H(+). Its function is as follows. Specifically methylates the guanine in position 1835 (m2G1835) of 23S rRNA. The chain is Ribosomal RNA large subunit methyltransferase G from Shewanella sp. (strain ANA-3).